The following is a 121-amino-acid chain: uncharacterized protein (121 aa).

Disordered stretches follow at residues 38–76 (NQMAQKRNKQSKKPKQTSKGVKKSSKQNKNSSKNNKYQQ) and 91–121 (SVLRSAHNSGSKMSDISNSIQLLSMTKKQEN). Over residues 43–63 (KRNKQSKKPKQTSKGVKKSSK) the composition is skewed to basic residues. The span at 64 to 76 (QNKNSSKNNKYQQ) shows a compositional bias: low complexity.

This is an uncharacterized protein from Schizosaccharomyces pombe (strain 972 / ATCC 24843) (Fission yeast).